The primary structure comprises 21 residues: Formate ester dehydrogenase beta chain (21 aa).

As to quaternary structure, heterotrimer composed of an alpha, a beta and a gamma chain.

In Amycolatopsis methanolica, this protein is Formate ester dehydrogenase beta chain.